We begin with the raw amino-acid sequence, 159 residues long: 2-C-methyl-D-erythritol 2,4-cyclodiphosphate synthase (159 aa).

A divalent metal cation is bound by residues Asp10 and His12. 4-CDP-2-C-methyl-D-erythritol 2-phosphate-binding positions include 10–12 and 37–38; these read DVH and HS. His45 contacts a divalent metal cation. 4-CDP-2-C-methyl-D-erythritol 2-phosphate-binding positions include 59-61, 64-68, 103-109, 135-138, Phe142, and Arg145; these read DIG, FLDTD, AQAPKML, and TTTE.

Belongs to the IspF family. As to quaternary structure, homotrimer. A divalent metal cation is required as a cofactor.

It catalyses the reaction 4-CDP-2-C-methyl-D-erythritol 2-phosphate = 2-C-methyl-D-erythritol 2,4-cyclic diphosphate + CMP. It participates in isoprenoid biosynthesis; isopentenyl diphosphate biosynthesis via DXP pathway; isopentenyl diphosphate from 1-deoxy-D-xylulose 5-phosphate: step 4/6. Its function is as follows. Involved in the biosynthesis of isopentenyl diphosphate (IPP) and dimethylallyl diphosphate (DMAPP), two major building blocks of isoprenoid compounds. Catalyzes the conversion of 4-diphosphocytidyl-2-C-methyl-D-erythritol 2-phosphate (CDP-ME2P) to 2-C-methyl-D-erythritol 2,4-cyclodiphosphate (ME-CPP) with a corresponding release of cytidine 5-monophosphate (CMP). This is 2-C-methyl-D-erythritol 2,4-cyclodiphosphate synthase from Francisella tularensis subsp. tularensis (strain FSC 198).